Reading from the N-terminus, the 360-residue chain is Phospho-N-acetylmuramoyl-pentapeptide-transferase (360 aa).

Transmembrane regions (helical) follow at residues 25–45 (RGIL…PWLI), 74–94 (MGGA…ADLA), 97–117 (YVWV…VDDY), 132–152 (WKYF…YMTA), 168–188 (IEIP…VGSS), 199–219 (GLAI…CYLS), 236–256 (SGEL…FLWF), 263–283 (VFMG…IAVI), 288–308 (VVLF…MIQV), and 338–358 (VIVR…ATLK).

Belongs to the glycosyltransferase 4 family. MraY subfamily. Mg(2+) is required as a cofactor.

Its subcellular location is the cell inner membrane. The enzyme catalyses UDP-N-acetyl-alpha-D-muramoyl-L-alanyl-gamma-D-glutamyl-meso-2,6-diaminopimeloyl-D-alanyl-D-alanine + di-trans,octa-cis-undecaprenyl phosphate = di-trans,octa-cis-undecaprenyl diphospho-N-acetyl-alpha-D-muramoyl-L-alanyl-D-glutamyl-meso-2,6-diaminopimeloyl-D-alanyl-D-alanine + UMP. It functions in the pathway cell wall biogenesis; peptidoglycan biosynthesis. Its function is as follows. Catalyzes the initial step of the lipid cycle reactions in the biosynthesis of the cell wall peptidoglycan: transfers peptidoglycan precursor phospho-MurNAc-pentapeptide from UDP-MurNAc-pentapeptide onto the lipid carrier undecaprenyl phosphate, yielding undecaprenyl-pyrophosphoryl-MurNAc-pentapeptide, known as lipid I. The polypeptide is Phospho-N-acetylmuramoyl-pentapeptide-transferase (Stutzerimonas stutzeri (strain A1501) (Pseudomonas stutzeri)).